Reading from the N-terminus, the 467-residue chain is Na(+)/H(+) exchange regulatory cofactor-like protein nrfl-1 (467 aa).

PDZ domains are found at residues 12 to 94 (RLCV…ISEE) and 143 to 225 (LAEL…ASED). The interval 344-429 (MSSHTEVLPP…ASSTSGYDDD (86 aa)) is disordered. The span at 407 to 425 (PSPLSNGSSHGYAASSTSG) shows a compositional bias: polar residues.

As to quaternary structure, interacts (via PDZ 2 domain) with aat-6 (via PDZ-binding motif); the interaction sequesters aat-6 to the apical cell membrane of intestinal cells. In terms of processing, phosphorylated. Expressed in the excretory canal and intestine. Expressed on the apical cell membrane of intestinal cells (at protein level).

It is found in the cell projection. The protein localises to the microvillus membrane. Its subcellular location is the apical cell membrane. Scaffold protein that connects plasma membrane proteins with members of the ezrin/moesin/radixin family and thereby helps to link them to the actin cytoskeleton and to regulate their surface expression. Anchors the amino acid transporter protein aat-6 to the apical cell membrane of intestinal cells, particularly in older animals, in order to maintain amino acid homeostasis. May play a role in promoting fertility. This chain is Na(+)/H(+) exchange regulatory cofactor-like protein nrfl-1, found in Caenorhabditis elegans.